A 697-amino-acid polypeptide reads, in one-letter code: SITS-binding protein (697 aa).

The disordered stretch occupies residues 1 to 20 (MARRAKKMASNSGDSSPEPG). Residues 2–29 (ARRAKKMASNSGDSSPEPGIKEINETWK) lie on the Cytoplasmic side of the membrane. A helical membrane pass occupies residues 30-50 (GAIACLGVALLFLMTIGVLYW). N-linked (GlcNAc...) asparagine glycans are attached at residues Asn112, Asn134, Asn162, Asn386, Asn405, and Asn470. 2 helical membrane passes run 503–521 (GLIP…FFIP) and 542–562 (WMQI…WVFG). A glycan (N-linked (GlcNAc...) asparagine) is linked at Asn568.

The protein belongs to the glycosyl hydrolase 31 family. As to quaternary structure, homodimer; disulfide-linked. Electroplax tissue, brain (200-fold less), and heart (500-fold less).

It is found in the membrane. Its function is as follows. This glycoprotein is probably not a functional part of the chloride channel. This is SITS-binding protein from Tetronarce californica (Pacific electric ray).